The chain runs to 600 residues: PWWP domain-containing protein 2B (600 aa).

5 disordered regions span residues 81 to 115 (ETGP…PVPA), 143 to 171 (WVPQ…LILS), 186 to 350 (KSTV…LGDG), 366 to 408 (GCPR…PQGK), and 426 to 477 (DCTS…TVPP). The span at 104–115 (EPPPPLIPPVPA) shows a compositional bias: pro residues. The span at 151–160 (TIKRTRRRLS) shows a compositional bias: basic residues. Polar residues predominate over residues 187–200 (STVSPQEASPSPLN). Phosphoserine occurs at positions 190 and 210. Basic and acidic residues predominate over residues 239 to 252 (EKREEDRVAGERVP). Serine 254 carries the post-translational modification Phosphoserine. Over residues 286-297 (PQQSLQNGSQDS) the composition is skewed to polar residues. Basic and acidic residues predominate over residues 298-309 (EVSRDVEPRGGG). Over residues 328–339 (PVPPISDLPPPK) the composition is skewed to pro residues. Residues 381 to 395 (DGSSHGLEDLSSGSS) are compositionally biased toward low complexity. Residues 443-456 (SSGSEVTSPDTGDL) are compositionally biased toward polar residues. At serine 457 the chain carries Phosphoserine. Residues 457–468 (SSGDSASVPSSS) show a composition bias toward low complexity. The PWWP domain occupies 500 to 560 (VGDIVWGKIH…ISKLSPFSEF (61 aa)).

Component of a MTA1-specific subcomplex of the NuRD complex composed of PWWP2B, MTA1 and HDAC1 but does not contain CHD4 and MBD3. Interacts with MTA1, MTA2, MTA3, HDAC1, HDAC2, RBBP4, RBBP7, BRCC3 and ZNF516. Does not interact with CHD4 and MBD3. In terms of processing, deubiquitinated by BRCC3; leading to its stabilization. In terms of tissue distribution, expressed in the brown adipose tissue.

It is found in the nucleus. Chromatin-binding protein that acts as an adapter between distinct nucleosome components (H3K36me3 or H2A.Z) and chromatin-modifying complexes, contributing to the regulation of the levels of histone acetylation at actively transcribed genes. Competes with CHD4 and MBD3 for interaction with MTA1 to form a NuRD subcomplex, preventing the formation of full NuRD complex (containing CHD4 and MBD3), leading to recruitment of HDACs to gene promoters resulting in turn in the deacetylation of nearby H3K27 and H2A.Z. Plays a role in facilitating transcriptional elongation through regulation of histone acetylation. Negatively regulates brown adipocyte thermogenesis by interacting with and stabilizing HDAC1 at the UCP1 gene promoter, thereby promoting histone deacetylation at the promoter leading to the repression of UCP1 expression. The chain is PWWP domain-containing protein 2B (Pwwp2b) from Mus musculus (Mouse).